The chain runs to 318 residues: GPN-loop GTPase 2 (318 aa).

29 to 34 (GSGKST) is a binding site for GTP. Residues 85–87 (GPN) carry the Gly-Pro-Asn (GPN)-loop; involved in dimer interface motif. 187–190 (SKMD) contributes to the GTP binding site.

This sequence belongs to the GPN-loop GTPase family. In terms of assembly, heterodimers with gpn1 or gpn3. Binds to RNA polymerase II (RNAPII).

In terms of biological role, small GTPase required for proper localization of RNA polymerase II and III (RNAPII and RNAPIII). May act at an RNAP assembly step prior to nuclear import. In Xenopus laevis (African clawed frog), this protein is GPN-loop GTPase 2.